Reading from the N-terminus, the 165-residue chain is Cytochrome b6-f complex subunit 4 (165 aa).

Helical transmembrane passes span leucine 36–valine 56, leucine 95–glutamate 115, and threonine 131–isoleucine 151.

It belongs to the cytochrome b family. PetD subfamily. In terms of assembly, the 4 large subunits of the cytochrome b6-f complex are cytochrome b6, subunit IV (17 kDa polypeptide, petD), cytochrome f and the Rieske protein, while the 4 small subunits are petG, petL, petM and petN. The complex functions as a dimer.

It is found in the plastid. Its subcellular location is the chloroplast thylakoid membrane. Component of the cytochrome b6-f complex, which mediates electron transfer between photosystem II (PSII) and photosystem I (PSI), cyclic electron flow around PSI, and state transitions. The chain is Cytochrome b6-f complex subunit 4 from Populus alba (White poplar).